The following is a 233-amino-acid chain: Leucyl/phenylalanyl-tRNA--protein transferase (233 aa).

It belongs to the L/F-transferase family.

It is found in the cytoplasm. The catalysed reaction is N-terminal L-lysyl-[protein] + L-leucyl-tRNA(Leu) = N-terminal L-leucyl-L-lysyl-[protein] + tRNA(Leu) + H(+). The enzyme catalyses N-terminal L-arginyl-[protein] + L-leucyl-tRNA(Leu) = N-terminal L-leucyl-L-arginyl-[protein] + tRNA(Leu) + H(+). It catalyses the reaction L-phenylalanyl-tRNA(Phe) + an N-terminal L-alpha-aminoacyl-[protein] = an N-terminal L-phenylalanyl-L-alpha-aminoacyl-[protein] + tRNA(Phe). In terms of biological role, functions in the N-end rule pathway of protein degradation where it conjugates Leu, Phe and, less efficiently, Met from aminoacyl-tRNAs to the N-termini of proteins containing an N-terminal arginine or lysine. The polypeptide is Leucyl/phenylalanyl-tRNA--protein transferase (Chromobacterium violaceum (strain ATCC 12472 / DSM 30191 / JCM 1249 / CCUG 213 / NBRC 12614 / NCIMB 9131 / NCTC 9757 / MK)).